An 820-amino-acid polypeptide reads, in one-letter code: Leucine--tRNA ligase (820 aa).

The short motif at Pro-42–His-52 is the 'HIGH' region element. The short motif at Lys-576–Ser-580 is the 'KMSKS' region element. ATP is bound at residue Lys-579.

The protein belongs to the class-I aminoacyl-tRNA synthetase family.

It localises to the cytoplasm. It catalyses the reaction tRNA(Leu) + L-leucine + ATP = L-leucyl-tRNA(Leu) + AMP + diphosphate. This chain is Leucine--tRNA ligase, found in Coxiella burnetii (strain CbuK_Q154) (Coxiella burnetii (strain Q154)).